A 298-amino-acid chain; its full sequence is Acetylglutamate kinase (298 aa).

Residues G69–G70, R91, and N196 each bind substrate.

Belongs to the acetylglutamate kinase family. ArgB subfamily.

The protein resides in the cytoplasm. The enzyme catalyses N-acetyl-L-glutamate + ATP = N-acetyl-L-glutamyl 5-phosphate + ADP. The protein operates within amino-acid biosynthesis; L-arginine biosynthesis; N(2)-acetyl-L-ornithine from L-glutamate: step 2/4. In terms of biological role, catalyzes the ATP-dependent phosphorylation of N-acetyl-L-glutamate. This is Acetylglutamate kinase from Bradyrhizobium sp. (strain ORS 278).